We begin with the raw amino-acid sequence, 137 residues long: NADH-quinone oxidoreductase subunit A (137 aa).

A run of 3 helical transmembrane segments spans residues 12-32 (WGFA…LGLS), 66-86 (FYLV…LFAW), and 95-115 (WTGF…LVYL).

This sequence belongs to the complex I subunit 3 family. NDH-1 is composed of 13 different subunits. Subunits NuoA, H, J, K, L, M, N constitute the membrane sector of the complex.

It is found in the cell inner membrane. It catalyses the reaction a quinone + NADH + 5 H(+)(in) = a quinol + NAD(+) + 4 H(+)(out). Functionally, NDH-1 shuttles electrons from NADH, via FMN and iron-sulfur (Fe-S) centers, to quinones in the respiratory chain. The immediate electron acceptor for the enzyme in this species is believed to be ubiquinone. Couples the redox reaction to proton translocation (for every two electrons transferred, four hydrogen ions are translocated across the cytoplasmic membrane), and thus conserves the redox energy in a proton gradient. The sequence is that of NADH-quinone oxidoreductase subunit A from Pseudomonas savastanoi pv. phaseolicola (strain 1448A / Race 6) (Pseudomonas syringae pv. phaseolicola (strain 1448A / Race 6)).